A 99-amino-acid chain; its full sequence is DNA-directed RNA polymerase subunit omega (99 aa).

It belongs to the RNA polymerase subunit omega family. As to quaternary structure, the RNAP catalytic core consists of 2 alpha, 1 beta, 1 beta' and 1 omega subunit. When a sigma factor is associated with the core the holoenzyme is formed, which can initiate transcription.

The catalysed reaction is RNA(n) + a ribonucleoside 5'-triphosphate = RNA(n+1) + diphosphate. In terms of biological role, promotes RNA polymerase assembly. Latches the N- and C-terminal regions of the beta' subunit thereby facilitating its interaction with the beta and alpha subunits. The protein is DNA-directed RNA polymerase subunit omega of Deinococcus deserti (strain DSM 17065 / CIP 109153 / LMG 22923 / VCD115).